Here is a 498-residue protein sequence, read N- to C-terminus: DEAD-box ATP-dependent RNA helicase 12 (498 aa).

The tract at residues 1 to 114 (MNTNRGRYPP…RLPPPDTRYQ (114 aa)) is disordered. Positions 27–65 (SYRQQQPPQDQQYVQRGYSQNPQQMQLQQQHQQQQQQQQ) are enriched in low complexity. Residues 74 to 96 (GNASNANEVVQQTTQPEASSDAN) show a composition bias toward polar residues. A Q motif motif is present at residues 124-152 (NEFEDYFLKRDLLKGIYEKGFEKPSPIQE). Residues 155–325 (IPIALTGSDI…DRHLRKPYVI (171 aa)) enclose the Helicase ATP-binding domain. 168 to 175 (AKNGTGKT) lines the ATP pocket. At T230 the chain carries Phosphothreonine. Residues 273-276 (DEAD) carry the DEAD box motif. In terms of domain architecture, Helicase C-terminal spans 335–495 (GVTQYYAFVE…PIPSNIDQAI (161 aa)).

It belongs to the DEAD box helicase family. DDX6/DHH1 subfamily.

The protein resides in the cytoplasm. Its subcellular location is the P-body. It catalyses the reaction ATP + H2O = ADP + phosphate + H(+). ATP-dependent RNA helicase involved in mRNA turnover, and more specifically in mRNA decapping. The chain is DEAD-box ATP-dependent RNA helicase 12 (RH12) from Arabidopsis thaliana (Mouse-ear cress).